A 320-amino-acid polypeptide reads, in one-letter code: o-succinylbenzoate synthase (320 aa).

The active-site Proton donor is K133. Positions 161, 190, and 213 each coordinate Mg(2+). K235 (proton acceptor) is an active-site residue.

Belongs to the mandelate racemase/muconate lactonizing enzyme family. MenC type 1 subfamily. Requires a divalent metal cation as cofactor.

It catalyses the reaction (1R,6R)-6-hydroxy-2-succinyl-cyclohexa-2,4-diene-1-carboxylate = 2-succinylbenzoate + H2O. The protein operates within quinol/quinone metabolism; 1,4-dihydroxy-2-naphthoate biosynthesis; 1,4-dihydroxy-2-naphthoate from chorismate: step 4/7. Its pathway is quinol/quinone metabolism; menaquinone biosynthesis. Converts 2-succinyl-6-hydroxy-2,4-cyclohexadiene-1-carboxylate (SHCHC) to 2-succinylbenzoate (OSB). In Escherichia coli O45:K1 (strain S88 / ExPEC), this protein is o-succinylbenzoate synthase.